The following is a 2256-amino-acid chain: GON-4-like protein (2256 aa).

Disordered stretches follow at residues 1–56, 105–213, and 227–266; these read MLPC…DSAG, PSLE…SLGP, and LFIP…MTYD. Over residues 23–35 the composition is skewed to basic and acidic residues; the sequence is EDLHLEAAVKPDT. Residues 40 to 53 are compositionally biased toward polar residues; sequence DCTSESLSWGQSHD. The segment covering 141–176 has biased composition (basic and acidic residues); sequence TREDGGDHTVPEEPPSGEHAEEVKAEGGELEMHSEG. The span at 242 to 254 shows a compositional bias: basic residues; it reads RKKTKKGTKRKRD. S346 is modified (phosphoserine). Acidic residues predominate over residues 366–395; that stretch reads EDDDSSDEEYQPDEEEEDETAEESLLESDV. 3 disordered regions span residues 366 to 428, 441 to 460, and 545 to 573; these read EDDD…VLSE, SAEV…QTRD, and DVEN…DTED. Acidic residues predominate over residues 545–571; the sequence is DVENEDEADDDDDPEYNFLEDLDEPDT. A required for interaction with YY1, SIN3A and HDAC1, and transcriptional repression activity region spans residues 609–1363; that stretch reads EMGFSNMEDD…DCMEEISSDF (755 aa). S783 bears the Phosphoserine mark. Composition is skewed to low complexity over residues 947–959 and 1094–1115; these read TAGG…TETS and PWSE…LPSL. Disordered stretches follow at residues 947–969, 1078–1141, 1241–1288, and 1360–1620; these read TAGG…KTSP, AALP…SPCV, AEGK…EAVS, and SSDF…SRAR. Basic residues predominate over residues 1119–1135; the sequence is KFRKPYVRRKPTRRKGA. The segment covering 1364 to 1386 has biased composition (basic and acidic residues); sequence PKQDIGEEVKEECCMELDRDSPQ. 2 stretches are compositionally biased toward polar residues: residues 1387-1401 and 1429-1444; these read EKAS…QTAT and LPQS…TVLN. S1445 is modified (phosphoserine). A compositionally biased stretch (acidic residues) spans 1475-1495; that stretch reads GAEEEEEEDFDDLTQDEEDEL. Positions 1496-1510 are enriched in low complexity; that stretch reads SSASEESVLSVPELQ. Residues 1529–1553 are compositionally biased toward acidic residues; that stretch reads GESEEENSQEENSEPEEEEEEEAEG. Basic residues predominate over residues 1606 to 1620; the sequence is RSSHRARSRRGSRAR. PAH domains lie at 1644–1716 and 1726–1797; these read EQKD…LLPE and EQQA…FDHL. Disordered regions lie at residues 1831–1886 and 1909–1966; these read VEEE…LKKS and LELV…APIP. A compositionally biased stretch (basic and acidic residues) spans 1851–1868; sequence EIGVQHQDKESEWPEAAK. S1921 and S1994 each carry phosphoserine. Disordered regions lie at residues 2050–2078 and 2110–2148; these read PETS…STRD and IRGT…VLPK. A compositionally biased stretch (low complexity) spans 2111–2129; sequence RGTSSGASASEAAPTASRE. Residues 2163–2216 form the Myb-like domain; sequence STGEKVVLWTREADRVILTMCQEQGAQPHTFSVISQQLGNKTPVEVSHRFRELM. Positions 2223 to 2256 are disordered; that stretch reads CEASSEDEDDATSTSNADQLSDHGDLLSEEELDE.

Found in a complex with YY1, SIN3A and HDAC1.

It localises to the nucleus. Its function is as follows. Has transcriptional repressor activity, probably as part of a complex with YY1, SIN3A and HDAC1. Required for B cell lymphopoiesis. The polypeptide is GON-4-like protein (Gon4l) (Rattus norvegicus (Rat)).